Reading from the N-terminus, the 262-residue chain is Cyclin-dependent kinase inhibitor 1 (262 aa).

Positions 140–212 are disordered; that stretch reads SDVAEAGSEH…SAQQATRPKI (73 aa). Basic and acidic residues predominate over residues 160-169; sequence SGRDRERRET. Positions 198–208 are enriched in low complexity; that stretch reads SAATASAQQAT.

This sequence belongs to the CDI family. ICK/KRP subfamily. Expressed in roots, stems, leaves and apex.

Regulates the production of endosperm cells, affecting seed filling and embryo development. Regulates endoreduplication of endosperm cells. May play a role in the exit from the mitotic cell cycle during rice grain formation. Inhibitis leaf elongation rates by decreasing cell number, that is partly compensated by increased cell size. May not affect growth rate or cell size of the primary root. The polypeptide is Cyclin-dependent kinase inhibitor 1 (KRP1) (Oryza sativa subsp. japonica (Rice)).